The sequence spans 95 residues: Protein TusB (95 aa).

This sequence belongs to the DsrH/TusB family. Heterohexamer, formed by a dimer of trimers. The hexameric TusBCD complex contains 2 copies each of TusB, TusC and TusD. The TusBCD complex interacts with TusE.

The protein localises to the cytoplasm. In terms of biological role, part of a sulfur-relay system required for 2-thiolation of 5-methylaminomethyl-2-thiouridine (mnm(5)s(2)U) at tRNA wobble positions. The polypeptide is Protein TusB (Yersinia pseudotuberculosis serotype O:1b (strain IP 31758)).